Reading from the N-terminus, the 307-residue chain is UDP-N-acetylenolpyruvoylglucosamine reductase (307 aa).

In terms of domain architecture, FAD-binding PCMH-type spans 34–198 (TGGNADFYLS…LEAAFTLEPG (165 aa)). Arg177 is a catalytic residue. Residue Ser227 is the Proton donor of the active site. The active site involves Glu297.

Belongs to the MurB family. Requires FAD as cofactor.

It is found in the cytoplasm. It carries out the reaction UDP-N-acetyl-alpha-D-muramate + NADP(+) = UDP-N-acetyl-3-O-(1-carboxyvinyl)-alpha-D-glucosamine + NADPH + H(+). The protein operates within cell wall biogenesis; peptidoglycan biosynthesis. In terms of biological role, cell wall formation. The chain is UDP-N-acetylenolpyruvoylglucosamine reductase from Staphylococcus haemolyticus (strain JCSC1435).